The chain runs to 353 residues: Lysophosphatidic acid receptor 3 (353 aa).

Residues 1–31 are Extracellular-facing; sequence MNECHYDKHMDFFYNRSNTDTVDDWTGTKLV. Asn-15 is a glycosylation site (N-linked (GlcNAc...) asparagine). Residues 32 to 52 traverse the membrane as a helical segment; the sequence is IVLCVGTFFCLFIFFSNSLVI. Residues 53–67 are Cytoplasmic-facing; that stretch reads AAVIKNRKFHFPFYY. The chain crosses the membrane as a helical span at residues 68–88; that stretch reads LLANLAAADFFAGIAYVFLMF. Topologically, residues 89–101 are extracellular; sequence NTGPVSKTLTVNR. A helical membrane pass occupies residues 102–124; the sequence is WFLRQGLLDSSLTASLTNLLVIA. Over 125–146 the chain is Cytoplasmic; that stretch reads VERHMSIMRMRVHSNLTKKRVT. The helical transmembrane segment at 147 to 167 threads the bilayer; the sequence is LLILLVWAIAIFMGAVPTLGW. At 168–186 the chain is on the extracellular side; sequence NCLCNISACSSLAPIYSRS. Asn-172 is a glycosylation site (N-linked (GlcNAc...) asparagine). A helical transmembrane segment spans residues 187–207; it reads YLVFWTVSNLMAFLIMVVVYL. Residues 208–240 lie on the Cytoplasmic side of the membrane; that stretch reads RIYVYVKRKTNVLSPHTSGSISRRRTPMKLMKT. The chain crosses the membrane as a helical span at residues 241-261; sequence VMTVLGAFVVCWTPGLVVLLL. The Extracellular portion of the chain corresponds to 262–276; that stretch reads DGLNCRQCGVQHVKR. The helical transmembrane segment at 277-297 threads the bilayer; sequence WFLLLALLNSVVNPIIYSYKD. Over 298-353 the chain is Cytoplasmic; the sequence is EDMYGTMKKMICCFSQENPERRPSRIPSTVLSRSDTGSQYIEDSISQGAVCNKSTS. A lipid anchor (S-palmitoyl cysteine) is attached at Cys-309.

It belongs to the G-protein coupled receptor 1 family. Most abundantly expressed in prostate, testes, pancreas, and heart, with moderate levels in lung and ovary. No detectable expression in brain, placenta, liver, skeletal muscle, kidney, spleen, thymus, small intestine, colon, or peripheral blood leukocytes.

It is found in the cell membrane. Receptor for lysophosphatidic acid (LPA), a mediator of diverse cellular activities. May play a role in the development of ovarian cancer. Seems to be coupled to the G(i)/G(o) and G(q) families of heteromeric G proteins. This chain is Lysophosphatidic acid receptor 3 (LPAR3), found in Homo sapiens (Human).